The primary structure comprises 662 residues: p-hydroxybenzoic acid efflux pump subunit AaeB (662 aa).

Helical transmembrane passes span 22 to 42 (FAFKLSFAIVLSLFLGFHLQL), 52 to 72 (AAIVAAGPAFAAGGEPFSGAI), 76 to 96 (GMLRVVGTFIGCIGALIIIIA), 102 to 122 (VVMLMLCCIWAGLCTWVSSLV), 129 to 149 (VFGLAGYTTLIIIVSTQGTPL), 161 to 181 (EIVLGIVCAILADLLFSPRSI), 378 to 398 (LFWLSTGWTSGSVCMVMIAVV), 415 to 435 (FLFGTIYALPLGALMFMFIMP), 439 to 459 (QSMLLLCLSLGAMAFFLGLEV), 467 to 487 (LGALASTINILVLDNPMTFHI), and 491 to 511 (LDSAIGQIIGCFLALMVILLI).

It belongs to the aromatic acid exporter ArAE (TC 2.A.85) family.

Its subcellular location is the cell inner membrane. Functionally, forms an efflux pump with AaeA. Could function as a metabolic relief valve, allowing to eliminate certain compounds when they accumulate to high levels in the cell. The chain is p-hydroxybenzoic acid efflux pump subunit AaeB from Pectobacterium carotovorum subsp. carotovorum (strain PC1).